Consider the following 219-residue polypeptide: Dynein light chain Tctex-type 4 (219 aa).

The segment at 1-84 (MAGRPVPAGR…RRPSLGPVPP (84 aa)) is disordered. Basic and acidic residues predominate over residues 10–20 (RQEEELAKDPG). Phosphoserine is present on S64.

It belongs to the dynein light chain Tctex-type family. In terms of assembly, interacts with ENG/endoglin, TGFBR2 and TGFBR3. Interacts with PPP1CC.

It localises to the cell projection. Its subcellular location is the cilium. It is found in the flagellum. The protein resides in the cytoplasmic vesicle. The protein localises to the secretory vesicle. It localises to the acrosome. Its subcellular location is the cytoplasm. It is found in the cytoskeleton. The protein resides in the cilium axoneme. The protein localises to the nucleus. It localises to the microtubule organizing center. The chain is Dynein light chain Tctex-type 4 (DYNLT4) from Sus scrofa (Pig).